A 447-amino-acid chain; its full sequence is Glucose-6-phosphate isomerase (447 aa).

E288 serves as the catalytic Proton donor. Active-site residues include H309 and K423.

It belongs to the GPI family.

The protein resides in the cytoplasm. It catalyses the reaction alpha-D-glucose 6-phosphate = beta-D-fructose 6-phosphate. Its pathway is carbohydrate biosynthesis; gluconeogenesis. It functions in the pathway carbohydrate degradation; glycolysis; D-glyceraldehyde 3-phosphate and glycerone phosphate from D-glucose: step 2/4. In terms of biological role, catalyzes the reversible isomerization of glucose-6-phosphate to fructose-6-phosphate. This is Glucose-6-phosphate isomerase from Lactobacillus johnsonii (strain CNCM I-12250 / La1 / NCC 533).